Reading from the N-terminus, the 71-residue chain is MPSASGHHQIPAETQRHDDDQTQETAQGLSAAAMLAQEQADDLDAILDDIETVLETNAEEYVSSFVQKGGE.

The segment at methionine 1–serine 30 is disordered. The stretch at glutamine 23–threonine 56 forms a coiled coil. Positions glutamine 27–phenylalanine 65 are ARC ATPase binding. An Isoglutamyl lysine isopeptide (Glu-Lys) (interchain with K-? in acceptor proteins) cross-link involves residue glutamate 71.

Belongs to the prokaryotic ubiquitin-like protein family. Strongly interacts with the proteasome-associated ATPase ARC through a hydrophobic interface; the interacting region of Pup lies in its C-terminal half. There is one Pup binding site per ARC hexamer ring.

Its pathway is protein degradation; proteasomal Pup-dependent pathway. Functionally, protein modifier that is covalently attached to lysine residues of substrate proteins, thereby targeting them for proteasomal degradation. The tagging system is termed pupylation. The sequence is that of Prokaryotic ubiquitin-like protein Pup from Bifidobacterium animalis subsp. lactis (strain AD011).